The sequence spans 328 residues: Phosphate acyltransferase (328 aa).

Belongs to the PlsX family. In terms of assembly, homodimer. Probably interacts with PlsY.

It localises to the cytoplasm. The catalysed reaction is a fatty acyl-[ACP] + phosphate = an acyl phosphate + holo-[ACP]. It functions in the pathway lipid metabolism; phospholipid metabolism. Its function is as follows. Catalyzes the reversible formation of acyl-phosphate (acyl-PO(4)) from acyl-[acyl-carrier-protein] (acyl-ACP). This enzyme utilizes acyl-ACP as fatty acyl donor, but not acyl-CoA. The polypeptide is Phosphate acyltransferase (Staphylococcus saprophyticus subsp. saprophyticus (strain ATCC 15305 / DSM 20229 / NCIMB 8711 / NCTC 7292 / S-41)).